The sequence spans 87 residues: Insertion element IS407 uncharacterized 10.0 kDa protein (87 aa).

Belongs to the transposase 8 family.

This chain is Insertion element IS407 uncharacterized 10.0 kDa protein, found in Burkholderia multivorans (strain ATCC 17616 / 249).